Consider the following 247-residue polypeptide: MGLFACCTKYTRLSTDTKMKFPYVALSYINVTLCTYTAMLVGYMVTFNDSSELKYLQYWLLLSFLMSVVLNAPTLWTMLKTTEAHEVIYEMKLFHAMYFSNVLLNYVVFLDNQMGTNFVFVNNLIHCCVLFMIFVELLILLGHTMGTYTDYQYVKSCYMVILFVSVMSVTIVMGLECLKTKLIDNSLMFNAFVCALYIVIAIMWSLKNNLTSYYVSNLQSIQVVPFSYNDPPPPFSNIVMDDIKNKK.

Its subcellular location is the host cytoplasm. The protein localises to the host nucleus. Functionally, accelerates mortality in insect larvae. This is Protein AC124 from Lepidoptera (butterflies and moths).